The sequence spans 282 residues: Protein-export membrane protein SecF (282 aa).

6 helical membrane passes run 16–36 (MVALPLCLLILSVIFLAFNTV), 126–146 (QAIWALLFAFVLMAIVVFVAF), 148–168 (IFIPSVAVVLSAFSDIVITAA), 169–189 (FMDVFGLTLSLGTTAALLMLI), 221–241 (GIIMTTTTLAAVVVMFIVFSL), and 253–273 (VLIIGLIIDMMNTWMLNAGLL).

The protein belongs to the SecD/SecF family. SecF subfamily. As to quaternary structure, part of the protein translocation apparatus. Forms a complex with SecD.

The protein localises to the cell membrane. In terms of biological role, involved in protein export. This is Protein-export membrane protein SecF from Methanolacinia petrolearia (strain DSM 11571 / OCM 486 / SEBR 4847) (Methanoplanus petrolearius).